The primary structure comprises 826 residues: G-protein coupled receptor-associated sorting protein 2 (826 aa).

Disordered stretches follow at residues 1–126 (MTGA…AQAW), 204–286 (WCYP…NPFC), 336–371 (EGNRFRRRDKEEPNKTLKNENEKDVKNDETVEQESR), and 506–534 (IPEGASGNSEEKAKNAELGAEGEEQDSVA). The segment covering 13–31 (KPDKKPQEEVAGGAERESE) has biased composition (basic and acidic residues). Positions 59–73 (SSRARPKTETQSVSG) are enriched in polar residues. Residues 231 to 247 (TREETSIRSWPREEVNT) are compositionally biased toward basic and acidic residues. Positions 248-264 (RSRHRAKHQTNARSKPR) are enriched in basic residues. Phosphoserine is present on residues Ser-275 and Ser-277.

The protein belongs to the GPRASP family. In terms of assembly, interacts with cytoplasmic tails of a variety of G-protein coupled receptors such as muscarinic acetylcholine receptor M1/CHRM1 and calcitonin receptor/CALCR. Strongly expressed in the brain and the cochlea. Also in lung and muscle tissues. Localized in multiple structures of the cochlea, detected in the spiral ganglion, stria vascularis, spiral ligament, inner and outer hair cells.

Its function is as follows. May play a role in regulation of a variety of G-protein coupled receptors. The polypeptide is G-protein coupled receptor-associated sorting protein 2 (Gprasp2) (Mus musculus (Mouse)).